Reading from the N-terminus, the 149-residue chain is 3-hydroxyacyl-[acyl-carrier-protein] dehydratase FabZ (149 aa).

Residue His-47 is part of the active site.

It belongs to the thioester dehydratase family. FabZ subfamily.

It localises to the cytoplasm. The catalysed reaction is a (3R)-hydroxyacyl-[ACP] = a (2E)-enoyl-[ACP] + H2O. Its function is as follows. Involved in unsaturated fatty acids biosynthesis. Catalyzes the dehydration of short chain beta-hydroxyacyl-ACPs and long chain saturated and unsaturated beta-hydroxyacyl-ACPs. The polypeptide is 3-hydroxyacyl-[acyl-carrier-protein] dehydratase FabZ (Thioalkalivibrio sulfidiphilus (strain HL-EbGR7)).